Consider the following 47-residue polypeptide: Delta-actitoxin-Axm1e (47 aa).

3 disulfide bridges follow: Cys-4–Cys-44, Cys-6–Cys-34, and Cys-27–Cys-45.

Belongs to the sea anemone sodium channel inhibitory toxin family. Type I subfamily.

The protein localises to the secreted. The protein resides in the nematocyst. In terms of biological role, binds specifically to voltage-gated sodium channels (Nav), thereby delaying their inactivation. This toxin is active on a variety of voltage-gated sodium channels (Nav1.1/SCN1A, Nav1.2/SCN2A, Nav1.3/SCN3A, Nav1.4/SCN4A, Nav1.5/SCN5A and Nav1.6/SCN8A). The sequence is that of Delta-actitoxin-Axm1e from Anthopleura xanthogrammica (Giant green sea anemone).